The sequence spans 416 residues: MRQLCRGRVLGISVAIAHGVFSGSLNILLKFLISRYQFSFLTLVQCLTSSTAALSLELLRRLGLIAVPPFGLSLARSFAGVAVLSTLQSSLTLWSLRGLSLPMYVVFKRCLPLVTMLIGVLVLKNGAPSPGVLAAVLITTCGAALAGAGDLTGDPIGYVTGVLAVLVHAAYLVLIQKASADTEHGPLTAQYVIAVSATPLLVICSFASTDSIHAWTFPGWKDPAMVCIFVACILIGCAMNFTTLHCTYINSAVTTSFVGVVKSIATITVGMVAFSDVEPTSLFIAGVVVNTLGSIIYCVAKFMETRKQSNYEDLEAQPRGEEAQLSGDQLPFVMEELPGEGGNGRSEGGEAAGGPAQESRQEVRGSPRGVPLVAGSSEEGSRRSLKDAYLEVWRLVRGTRYMKKDYLIENEELPSP.

Transmembrane regions (helical) follow at residues 9–29 (VLGI…NILL), 38–58 (FSFL…SLEL), 64–84 (LIAV…VAVL), 103–123 (MYVV…VLVL), 131–151 (GVLA…AGDL), 155–175 (PIGY…LVLI), 187–207 (LTAQ…CSFA), 224–244 (AMVC…FTTL), 257–277 (FVGV…FSDV), and 280–300 (TSLF…YCVA). The segment at 334-384 (MEELPGEGGNGRSEGGEAAGGPAQESRQEVRGSPRGVPLVAGSSEEGSRRS) is disordered. A compositionally biased stretch (gly residues) spans 339 to 352 (GEGGNGRSEGGEAA).

It belongs to the TPT transporter family. SLC35D subfamily. As to quaternary structure, could interact with ATG14, BECN1 and PIK3C3 that form the PI3KC3-C1/AIC/autophagy initiation complex; enhancing the formation of the AIC and promoting autophagy.

Its subcellular location is the cytoplasmic vesicle. It localises to the secretory vesicle. The protein localises to the synaptic vesicle membrane. It is found in the early endosome membrane. The protein resides in the endoplasmic reticulum membrane. It carries out the reaction UDP-alpha-D-glucose(in) = UDP-alpha-D-glucose(out). Inhibited by proton uncouplers that directly abolish the proton electrochemical gradient. Its function is as follows. Probable UDP-glucose transmembrane transporter involved in UDP-glucose transport from the cytosol to the lumen of synaptic vesicles. It is involved in platelet dense granules maturation. Functionally, alternatively, could function as a molecular adapter enhancing the formation of the PI3KC3-C1/AIC/autophagy initiation complex to promote autophagy in dopaminergic neurons. Could also regulate the plasma membrane localization of the D(1A) dopamine receptor/DRD1 and dopamine signaling. In Homo sapiens (Human), this protein is Solute carrier family 35 member D3.